The following is a 127-amino-acid chain: Profilin (127 aa).

It belongs to the profilin family. As to quaternary structure, occurs in many kinds of cells as a complex with monomeric actin in a 1:1 ratio.

It is found in the cytoplasm. The protein resides in the cytoskeleton. Its function is as follows. Binds to actin and affects the structure of the cytoskeleton. At high concentrations, profilin prevents the polymerization of actin, whereas it enhances it at low concentrations. By binding to PIP2, it inhibits the formation of IP3 and DG. In S.pombe, it is essential for cytokinesis. The protein is Profilin (cdc3) of Schizosaccharomyces pombe (strain 972 / ATCC 24843) (Fission yeast).